The sequence spans 204 residues: Pyridoxal 5'-phosphate synthase subunit PdxT (204 aa).

Residue 52–54 coordinates L-glutamine; sequence GES. The active-site Nucleophile is the C84. L-glutamine contacts are provided by residues R116 and 143–144; that span reads IR. Catalysis depends on charge relay system residues H184 and E186.

It belongs to the glutaminase PdxT/SNO family. As to quaternary structure, in the presence of PdxS, forms a dodecamer of heterodimers. Only shows activity in the heterodimer.

The enzyme catalyses aldehydo-D-ribose 5-phosphate + D-glyceraldehyde 3-phosphate + L-glutamine = pyridoxal 5'-phosphate + L-glutamate + phosphate + 3 H2O + H(+). The catalysed reaction is L-glutamine + H2O = L-glutamate + NH4(+). The protein operates within cofactor biosynthesis; pyridoxal 5'-phosphate biosynthesis. Catalyzes the hydrolysis of glutamine to glutamate and ammonia as part of the biosynthesis of pyridoxal 5'-phosphate. The resulting ammonia molecule is channeled to the active site of PdxS. The polypeptide is Pyridoxal 5'-phosphate synthase subunit PdxT (Pyrobaculum aerophilum (strain ATCC 51768 / DSM 7523 / JCM 9630 / CIP 104966 / NBRC 100827 / IM2)).